Here is a 338-residue protein sequence, read N- to C-terminus: Glycerol-3-phosphate dehydrogenase [NAD(P)+] (338 aa).

NADPH contacts are provided by serine 15, tyrosine 16, histidine 36, and lysine 110. Sn-glycerol 3-phosphate is bound by residues lysine 110, glycine 139, and threonine 141. Alanine 143 contacts NADPH. Positions 195, 248, 258, 259, and 260 each coordinate sn-glycerol 3-phosphate. The Proton acceptor role is filled by lysine 195. Arginine 259 serves as a coordination point for NADPH. NADPH contacts are provided by valine 283 and glutamate 285.

This sequence belongs to the NAD-dependent glycerol-3-phosphate dehydrogenase family.

The protein resides in the cytoplasm. It catalyses the reaction sn-glycerol 3-phosphate + NAD(+) = dihydroxyacetone phosphate + NADH + H(+). The enzyme catalyses sn-glycerol 3-phosphate + NADP(+) = dihydroxyacetone phosphate + NADPH + H(+). It functions in the pathway membrane lipid metabolism; glycerophospholipid metabolism. Its function is as follows. Catalyzes the reduction of the glycolytic intermediate dihydroxyacetone phosphate (DHAP) to sn-glycerol 3-phosphate (G3P), the key precursor for phospholipid synthesis. This is Glycerol-3-phosphate dehydrogenase [NAD(P)+] from Edwardsiella ictaluri (strain 93-146).